A 301-amino-acid chain; its full sequence is Acetyl-coenzyme A carboxylase carboxyl transferase subunit beta (301 aa).

The CoA carboxyltransferase N-terminal domain maps to 25-294 (LWIKDPSTGE…NSDAPAPQKP (270 aa)).

It belongs to the AccD/PCCB family. In terms of assembly, acetyl-CoA carboxylase is a heterohexamer composed of biotin carboxyl carrier protein (AccB), biotin carboxylase (AccC) and two subunits each of ACCase subunit alpha (AccA) and ACCase subunit beta (AccD).

Its subcellular location is the cytoplasm. It carries out the reaction N(6)-carboxybiotinyl-L-lysyl-[protein] + acetyl-CoA = N(6)-biotinyl-L-lysyl-[protein] + malonyl-CoA. The protein operates within lipid metabolism; malonyl-CoA biosynthesis; malonyl-CoA from acetyl-CoA: step 1/1. Its function is as follows. Component of the acetyl coenzyme A carboxylase (ACC) complex. Biotin carboxylase (BC) catalyzes the carboxylation of biotin on its carrier protein (BCCP) and then the CO(2) group is transferred by the transcarboxylase to acetyl-CoA to form malonyl-CoA. This is Acetyl-coenzyme A carboxylase carboxyl transferase subunit beta from Brucella abortus (strain 2308).